We begin with the raw amino-acid sequence, 330 residues long: CRISPR-associated endonuclease Cas1 (330 aa).

Positions 154, 222, and 237 each coordinate Mn(2+).

This sequence belongs to the CRISPR-associated endonuclease Cas1 family. Homodimer, forms a heterotetramer with a Cas2 homodimer. Requires Mg(2+) as cofactor. The cofactor is Mn(2+).

Its function is as follows. CRISPR (clustered regularly interspaced short palindromic repeat), is an adaptive immune system that provides protection against mobile genetic elements (viruses, transposable elements and conjugative plasmids). CRISPR clusters contain spacers, sequences complementary to antecedent mobile elements, and target invading nucleic acids. CRISPR clusters are transcribed and processed into CRISPR RNA (crRNA). Acts as a dsDNA endonuclease. Involved in the integration of spacer DNA into the CRISPR cassette. This Clostridium perfringens (strain SM101 / Type A) protein is CRISPR-associated endonuclease Cas1.